Here is a 515-residue protein sequence, read N- to C-terminus: Thioredoxin domain-containing protein 2 (515 aa).

The interval 1 to 23 (MTLNNGGKANERGSNENPLQALS) is disordered. Phosphoserine occurs at positions 14 and 39. Positions 51–390 (TLHMSTEESE…NTIKSSEEDV (340 aa)) are disordered. 2 stretches are compositionally biased toward polar residues: residues 61-75 (FPQQ…SENT) and 85-136 (KPSS…TNST). Repeat copies occupy residues 92–106 (QLKQ…GYSK), 107–121 (QTNY…AKTT), 122–136 (HPKQ…TNST), 137–151 (HYRE…EDII), 152–166 (QPKK…EDII), 167–181 (QSKK…EDII), 182–196 (QSKK…EDII), 197–211 (QSKK…EDII), 212–226 (QSKK…EDII), 227–241 (QPKK…EDSV), 242–256 (PSKK…EDSV), 257–271 (QPKK…EDSV), 272–286 (QSKE…KDSI), 287–301 (QSKE…QDSI), 302–316 (QSKE…KDSV), 317–331 (QSKE…HESI), 332–346 (QSKE…KDSI), 347–362 (PSKE…DTIQ), 363–375 (SQEE…EDTI), 376–390 (QSQE…EEDV), and 391–405 (QLSE…AEIE). Residues 92–405 (QLKQENISKS…KLLGLGAEIE (314 aa)) form a 21 X 15 AA approximate tandem repeat of Q-P-K-X-G-D-I-P-K-S-[PS]-E-[KE]-X-I region. 2 stretches are compositionally biased toward basic and acidic residues: residues 137 to 293 (HYRE…ETKV) and 302 to 358 (QSKE…KSPE). Residue Ser146 is modified to Phosphoserine. Polar residues predominate over residues 375-384 (IQSQEGNTIK). Residues 398 to 515 (LGLGAEIETL…KLERSISELK (118 aa)) form the Thioredoxin domain. The cysteines at positions 442 and 445 are disulfide-linked.

As to expression, testis-specific. Strongly expressed in the testicular seminiferous tubules, mostly in the round spermatids.

It localises to the cytoplasm. Its function is as follows. Probably plays a regulatory role in sperm development. May participate in regulation of fibrous sheath (FS) assembly by supporting the formation of disulfide bonds during sperm tail morphogenesis. May also be required to rectify incorrect disulfide pairing and generate suitable pairs between the FS constituents. Can reduce disulfide bonds in vitro in the presence of NADP and thioredoxin reductase. The chain is Thioredoxin domain-containing protein 2 (Txndc2) from Mus musculus (Mouse).